The chain runs to 147 residues: Sentan (147 aa).

Positions 1 to 36 (MGGCMHSTWDHALHSRGEPRPSEAPASISAPSKMPK) are disordered. Residues 8-21 (TWDHALHSRGEPRP) are compositionally biased toward basic and acidic residues. The span at 23 to 32 (EAPASISAPS) shows a compositional bias: low complexity.

It belongs to the S-100 family. In terms of tissue distribution, expressed exclusively in ciliated epithelial cells. Detected in ciliated epithelium of trachea and oviduct (at protein level).

It localises to the cell projection. The protein resides in the cilium. Its function is as follows. May be a component of the linker structure that bridges the ciliary membrane and peripheral singlet microtubules. This is Sentan (Sntn) from Mus musculus (Mouse).